The following is a 488-amino-acid chain: Endoglucanase A (488 aa).

Substrate is bound by residues His59, 63–64, Tyr90, and His125; that span reads WY. Glu163 acts as the Proton donor in catalysis. Tyr226 provides a ligand contact to substrate. Glu252 serves as the catalytic Nucleophile. Substrate contacts are provided by residues 258 to 259, Trp286, and 291 to 293; these read AT and KDE. 2 disordered regions span residues 326–362 and 388–451; these read ESAS…AWDP and EPGA…WDPT. 2 stretches are compositionally biased toward pro residues: residues 332–353 and 405–416; these read PSDP…PPSD and PSEPSDPPPPSE. Acidic residues predominate over residues 417-433; the sequence is PEPDPGEPDPGEPDPGE.

This sequence belongs to the glycosyl hydrolase 5 (cellulase A) family.

It carries out the reaction Endohydrolysis of (1-&gt;4)-beta-D-glucosidic linkages in cellulose, lichenin and cereal beta-D-glucans.. The polypeptide is Endoglucanase A (celA) (Evansella cellulosilytica (strain ATCC 21833 / DSM 2522 / FERM P-1141 / JCM 9156 / N-4) (Bacillus cellulosilyticus)).